Here is a 480-residue protein sequence, read N- to C-terminus: Alpha-glucosidase (480 aa).

NAD(+) is bound at residue Val-4 to Ser-70. 2 residues coordinate substrate: Asp-119 and Asn-153. Cys-174 is a binding site for Mn(2+). His-175 functions as the Proton donor in the catalytic mechanism. His-203 contacts Mn(2+). Asp-260 acts as the Proton acceptor in catalysis.

This sequence belongs to the glycosyl hydrolase 4 family. Homodimer. NAD(+) serves as cofactor. The cofactor is Mn(2+).

It carries out the reaction Hydrolysis of terminal, non-reducing (1-&gt;4)-linked alpha-D-glucose residues with release of alpha-D-glucose.. Its activity is regulated as follows. Inhibited by EDTA in vitro. Its function is as follows. Is able to hydrolyze diverse types of alpha-glycoside bonds in di- and trisaccharides: alpha-1,4 bonds of maltose and maltotriose, alpha-1,1 bonds of trehalose, alpha-1,2 bonds of sucrose, alpha-1,3 bonds of turanose and melizitose, alpha-1,6 bonds of isomaltose and melibiose. AglA is not specific with respect to the configuration at the C-4 position of its substrates because it also possesses alpha-galactosidase activity. Acts on the substrate from the non-reducing end of the chain. The activity of AglA drops with increasing length of the saccharide chain. Does not hydrolyze alpha-, beta-, and gamma-cyclodextrins or polysaccharides (starch, pullulan, amylose, amylopectin, glycogen). Does not cleave beta-glycosidic bonds in di-, oligo-, or polysaccharides. The chain is Alpha-glucosidase (aglA) from Thermotoga neapolitana.